The sequence spans 349 residues: Short-wave-sensitive opsin 1 (349 aa).

Over 1 to 34 the chain is Extracellular; the sequence is MSKMPEEEEFYLFKNISSVGPWDGPQYHIAPVWA. Asn-15 is a glycosylation site (N-linked (GlcNAc...) asparagine). A helical membrane pass occupies residues 35 to 59; that stretch reads FQLQAAFMGIVFLAGLPLNSMVLVA. The Cytoplasmic portion of the chain corresponds to 60–71; the sequence is TVRYKKLRHPLN. The chain crosses the membrane as a helical span at residues 72-97; the sequence is YVLVNVSVGGFLLCIFSVLPVFVNSC. At 98 to 111 the chain is on the extracellular side; sequence NGYFVFGRHVCALE. Cys-108 and Cys-185 are disulfide-bonded. Residues 112-131 traverse the membrane as a helical segment; the sequence is GFLGTVAGLVTGWSLAFLAF. At 132 to 150 the chain is on the cytoplasmic side; sequence ERYIVICKPFGNFRFSSKH. The chain crosses the membrane as a helical span at residues 151 to 174; that stretch reads ALMVVLTTWTIGIGVSIPPFFGWS. Topologically, residues 175 to 200 are extracellular; the sequence is RYIAEGLQCSCGPDWYTVGTKYRSEY. Residues 201-228 form a helical membrane-spanning segment; that stretch reads YTWFLFIFCFIVPLSLICFSYAQLLRAL. At 229–250 the chain is on the cytoplasmic side; sequence KAVAAQQQESATTQKAEREVSR. The helical transmembrane segment at 251–274 threads the bilayer; it reads MVVVMVGSFCVCYVPYAALAMYMV. Topologically, residues 275 to 282 are extracellular; it reads NNRNHGLD. The helical transmembrane segment at 283–307 threads the bilayer; it reads LRLVSIPAFFSKSSCIYNPIIYCFM. At Lys-294 the chain carries N6-(retinylidene)lysine. Over 308-349 the chain is Cytoplasmic; it reads NKQFRACIMEMVCGKAMTDESDISSSQKTEVSTVSSSQVGPN.

This sequence belongs to the G-protein coupled receptor 1 family. Opsin subfamily. Phosphorylated on some or all of the serine and threonine residues present in the C-terminal region.

The protein localises to the cell membrane. Its subcellular location is the photoreceptor inner segment. It is found in the cell projection. The protein resides in the cilium. It localises to the photoreceptor outer segment. The protein localises to the cytoplasm. Its subcellular location is the perinuclear region. In terms of biological role, visual pigments are the light-absorbing molecules that mediate vision. They consist of an apoprotein, opsin, covalently linked to cis-retinal. Required for the maintenance of cone outer segment organization in the ventral retina, but not essential for the maintenance of functioning cone photoreceptors. Involved in ensuring correct abundance and localization of retinal membrane proteins. May increase spectral sensitivity in dim light. In Saimiri boliviensis boliviensis (Bolivian squirrel monkey), this protein is Short-wave-sensitive opsin 1 (OPN1SW).